Here is a 745-residue protein sequence, read N- to C-terminus: Polyribonucleotide nucleotidyltransferase (745 aa).

Mg(2+)-binding residues include Asp487 and Asp493. One can recognise a KH domain in the interval 554–613; sequence PSSTTVKIDKDKIKDIIGPGGKIIKEICETSNAKIDISDDGTVSIYASDRDKIKIALDKI. In terms of domain architecture, S1 motif spans 623–691; it reads GEIFNGTVMK…NKGKAKLTIK (69 aa). Residues 693-732 form a disordered region; sequence AYKDHSSNNTKQKNNVKDDSESEQRRDTSKKRTWNEDNNT. Over residues 707 to 719 the composition is skewed to basic and acidic residues; it reads NVKDDSESEQRRD.

This sequence belongs to the polyribonucleotide nucleotidyltransferase family. Mg(2+) is required as a cofactor.

Its subcellular location is the cytoplasm. The catalysed reaction is RNA(n+1) + phosphate = RNA(n) + a ribonucleoside 5'-diphosphate. Its function is as follows. Involved in mRNA degradation. Catalyzes the phosphorolysis of single-stranded polyribonucleotides processively in the 3'- to 5'-direction. In Rickettsia prowazekii (strain Madrid E), this protein is Polyribonucleotide nucleotidyltransferase.